A 287-amino-acid chain; its full sequence is ATP synthase subunit a (287 aa).

The next 6 membrane-spanning stretches (helical) occupy residues 38-58 (DSMV…WTAA), 96-116 (FIAP…AMDM), 139-161 (VVPT…LRFW), 187-207 (PLFA…EYVA), 225-245 (LVFM…SGVL), and 259-279 (LFHI…ALIY).

Belongs to the ATPase A chain family. F-type ATPases have 2 components, CF(1) - the catalytic core - and CF(0) - the membrane proton channel. CF(1) has five subunits: alpha(3), beta(3), gamma(1), delta(1), epsilon(1). CF(0) has three main subunits: a(1), b(2) and c(9-12). The alpha and beta chains form an alternating ring which encloses part of the gamma chain. CF(1) is attached to CF(0) by a central stalk formed by the gamma and epsilon chains, while a peripheral stalk is formed by the delta and b chains.

The protein localises to the cell inner membrane. In terms of biological role, key component of the proton channel; it plays a direct role in the translocation of protons across the membrane. This chain is ATP synthase subunit a, found in Verminephrobacter eiseniae (strain EF01-2).